We begin with the raw amino-acid sequence, 249 residues long: 3-deoxy-D-manno-octulosonic acid kinase (249 aa).

Residue Asp175 is part of the active site.

This sequence belongs to the protein kinase superfamily. KdkA/RfaP family.

The protein localises to the cell inner membrane. It carries out the reaction an alpha-Kdo-(2-&gt;6)-lipid IVA + ATP = a 4-O-phospho-alpha-Kdo-(2-&gt;6)-lipid IVA + ADP + H(+). It functions in the pathway bacterial outer membrane biogenesis; LPS core biosynthesis. In terms of biological role, catalyzes the ATP-dependent phosphorylation of the 3-deoxy-D-manno-octulosonic acid (Kdo) residue in Kdo-lipid IV(A) at the 4-OH position. In Stenotrophomonas maltophilia (strain R551-3), this protein is 3-deoxy-D-manno-octulosonic acid kinase.